The sequence spans 344 residues: Transcription factor JunB (344 aa).

Glycyl lysine isopeptide (Lys-Gly) (interchain with G-Cter in SUMO2) cross-links involve residues lysine 4, lysine 33, and lysine 36. Gly residues predominate over residues 51-65 (KGPGARGPGPEGSGA). The disordered stretch occupies residues 51–75 (KGPGARGPGPEGSGAGSYFSGQGSD). Lysine 81 participates in a covalent cross-link: Glycyl lysine isopeptide (Lys-Gly) (interchain with G-Cter in SUMO2). Phosphothreonine occurs at positions 102 and 104. At serine 117 the chain carries Phosphoserine. Residue lysine 138 forms a Glycyl lysine isopeptide (Lys-Gly) (interchain with G-Cter in SUMO2) linkage. Disordered regions lie at residues 181 to 202 (NLSSYSPASAPSGGSGTAVGTG) and 237 to 257 (KEEPQTVPEARSRDATPPVSP). Positions 183–192 (SSYSPASAPS) are enriched in low complexity. Lysine 237 carries the post-translational modification N6-acetyllysine; alternate. Lysine 237 participates in a covalent cross-link: Glycyl lysine isopeptide (Lys-Gly) (interchain with G-Cter in SUMO1); alternate. Residue lysine 237 forms a Glycyl lysine isopeptide (Lys-Gly) (interchain with G-Cter in SUMO2); alternate linkage. The segment covering 237–250 (KEEPQTVPEARSRD) has biased composition (basic and acidic residues). Serine 248 carries the post-translational modification Phosphoserine. Threonine 252 carries the post-translational modification Phosphothreonine. Position 256 is a phosphoserine (serine 256). Residues 265-292 (RIKVERKRLRNRLAATKCRKRKLERIAR) are basic motif. The bZIP domain occupies 265–328 (RIKVERKRLR…AQLKQKVMTH (64 aa)). Residues 293-321 (LEDKVKTLKAENAGLSSAAGLLREQVAQL) are leucine-zipper. Residue lysine 340 forms a Glycyl lysine isopeptide (Lys-Gly) (interchain with G-Cter in SUMO2) linkage.

It belongs to the bZIP family. Jun subfamily. Binds DNA as a homodimer or as a heterodimer with another member of the Jun/Fos family. Component of an AP-1 transcription factor complex composed of JUN-FOS heterodimers. As part of the AP-1 transcription factor complex, forms heterodimers with FOSB, thereby binding to the AP-1 consensus sequence and stimulating transcription. Interacts with NFE2 (via its WW domains). Post-translationally, ubiquitinated by ITCH, leading to its degradation.

The protein resides in the nucleus. In terms of biological role, transcription factor involved in regulating gene activity following the primary growth factor response. Binds to the DNA sequence 5'-TGA[GC]TCA-3'. Heterodimerizes with proteins of the FOS family to form an AP-1 transcription complex, thereby enhancing its DNA binding activity to an AP-1 consensus sequence 5'-TGA[GC]TCA-3' and enhancing its transcriptional activity. The chain is Transcription factor JunB (Junb) from Mus musculus (Mouse).